We begin with the raw amino-acid sequence, 408 residues long: LL-diaminopimelate aminotransferase (408 aa).

Substrate contacts are provided by Tyr-15 and Gly-42. Pyridoxal 5'-phosphate-binding positions include Tyr-72, 108–109 (SK), Tyr-132, Asn-187, Tyr-218, and 246–248 (SFS). Lys-109, Tyr-132, and Asn-187 together coordinate substrate. At Lys-249 the chain carries N6-(pyridoxal phosphate)lysine. Pyridoxal 5'-phosphate-binding residues include Arg-257 and Asn-292. Residues Asn-292 and Arg-388 each contribute to the substrate site.

It belongs to the class-I pyridoxal-phosphate-dependent aminotransferase family. LL-diaminopimelate aminotransferase subfamily. As to quaternary structure, homodimer. Pyridoxal 5'-phosphate is required as a cofactor.

It carries out the reaction (2S,6S)-2,6-diaminopimelate + 2-oxoglutarate = (S)-2,3,4,5-tetrahydrodipicolinate + L-glutamate + H2O + H(+). Its pathway is amino-acid biosynthesis; L-lysine biosynthesis via DAP pathway; LL-2,6-diaminopimelate from (S)-tetrahydrodipicolinate (aminotransferase route): step 1/1. In terms of biological role, involved in the synthesis of meso-diaminopimelate (m-DAP or DL-DAP), required for both lysine and peptidoglycan biosynthesis. Catalyzes the direct conversion of tetrahydrodipicolinate to LL-diaminopimelate. The sequence is that of LL-diaminopimelate aminotransferase from Synechococcus sp. (strain WH7803).